The chain runs to 399 residues: Acetylornithine aminotransferase (399 aa).

Residues 99–100 (GA) and Phe-132 contribute to the pyridoxal 5'-phosphate site. Arg-135 contributes to the N(2)-acetyl-L-ornithine binding site. Residue 217–220 (DEVQ) coordinates pyridoxal 5'-phosphate. At Lys-246 the chain carries N6-(pyridoxal phosphate)lysine. Residue Thr-274 coordinates N(2)-acetyl-L-ornithine. Thr-275 is a pyridoxal 5'-phosphate binding site.

This sequence belongs to the class-III pyridoxal-phosphate-dependent aminotransferase family. ArgD subfamily. Homodimer. Pyridoxal 5'-phosphate serves as cofactor.

The protein resides in the cytoplasm. The catalysed reaction is N(2)-acetyl-L-ornithine + 2-oxoglutarate = N-acetyl-L-glutamate 5-semialdehyde + L-glutamate. It participates in amino-acid biosynthesis; L-arginine biosynthesis; N(2)-acetyl-L-ornithine from L-glutamate: step 4/4. This chain is Acetylornithine aminotransferase, found in Agrobacterium fabrum (strain C58 / ATCC 33970) (Agrobacterium tumefaciens (strain C58)).